The primary structure comprises 336 residues: Dihydroorotate dehydrogenase (quinone) (336 aa).

FMN is bound by residues 62 to 66 (AGLDK) and Thr86. Lys66 lines the substrate pocket. 111–115 (NRMGF) lines the substrate pocket. 2 residues coordinate FMN: Asn139 and Asn172. Asn172 lines the substrate pocket. Ser175 (nucleophile) is an active-site residue. Residue Asn177 participates in substrate binding. Residues Lys217 and Thr245 each coordinate FMN. 246-247 (NT) contacts substrate. FMN-binding positions include Gly268, Gly297, and 318–319 (FS).

The protein belongs to the dihydroorotate dehydrogenase family. Type 2 subfamily. As to quaternary structure, monomer. FMN is required as a cofactor.

The protein resides in the cell membrane. The catalysed reaction is (S)-dihydroorotate + a quinone = orotate + a quinol. The protein operates within pyrimidine metabolism; UMP biosynthesis via de novo pathway; orotate from (S)-dihydroorotate (quinone route): step 1/1. In terms of biological role, catalyzes the conversion of dihydroorotate to orotate with quinone as electron acceptor. This Photorhabdus laumondii subsp. laumondii (strain DSM 15139 / CIP 105565 / TT01) (Photorhabdus luminescens subsp. laumondii) protein is Dihydroorotate dehydrogenase (quinone).